The primary structure comprises 669 residues: Glycine--tRNA ligase beta subunit (669 aa).

Belongs to the class-II aminoacyl-tRNA synthetase family. In terms of assembly, tetramer of two alpha and two beta subunits.

The protein resides in the cytoplasm. The catalysed reaction is tRNA(Gly) + glycine + ATP = glycyl-tRNA(Gly) + AMP + diphosphate. This Phenylobacterium zucineum (strain HLK1) protein is Glycine--tRNA ligase beta subunit.